Reading from the N-terminus, the 346-residue chain is Cyclin-dependent kinase 20 (346 aa).

Positions 4-288 (YCILGRIGEG…ASKALLHQYF (285 aa)) constitute a Protein kinase domain. ATP is bound by residues 10–18 (IGEGAHGIV) and lysine 33. Catalysis depends on aspartate 127, which acts as the Proton acceptor.

It belongs to the protein kinase superfamily. CMGC Ser/Thr protein kinase family. CDC2/CDKX subfamily. Monomer. Interacts with TBC1D32. Interacts with MAK.

It localises to the nucleus. Its subcellular location is the cytoplasm. The protein resides in the cell projection. It is found in the cilium. The enzyme catalyses L-seryl-[protein] + ATP = O-phospho-L-seryl-[protein] + ADP + H(+). It carries out the reaction L-threonyl-[protein] + ATP = O-phospho-L-threonyl-[protein] + ADP + H(+). In terms of biological role, required for high-level Shh responses in the developing neural tube. Together with TBC1D32, controls the structure of the primary cilium by coordinating assembly of the ciliary membrane and axoneme, allowing GLI2 to be properly activated in response to SHH signaling. Involved in cell growth. Activates CDK2, a kinase involved in the control of the cell cycle, by phosphorylating residue 'Thr-160'. The protein is Cyclin-dependent kinase 20 (CDK20) of Homo sapiens (Human).